The sequence spans 581 residues: Alpha-amylase 2 (581 aa).

The N-terminal stretch at 1–24 is a signal peptide; it reads MNYRRNICLRIGWMLLFAFIPAYA. A disulfide bond links cysteine 56 and cysteine 64. Tryptophan 109 serves as a coordination point for substrate. Residue asparagine 147 coordinates Ca(2+). Cysteine 176 and cysteine 191 are joined by a disulfide. A Ca(2+)-binding site is contributed by aspartate 202. Arginine 231 is a substrate binding site. 3 residues coordinate Ca(2+): aspartate 233, histidine 237, and glutamate 257. The active-site Nucleophile is aspartate 233. Residue 236-237 coordinates substrate; it reads KH. The Proton donor role is filled by glutamate 257. Glycine 261 serves as a coordination point for substrate. An intrachain disulfide couples cysteine 267 to cysteine 311. N-linked (GlcNAc...) asparagine glycosylation occurs at asparagine 291. Aspartate 325 serves as a coordination point for substrate. The N-linked (GlcNAc...) asparagine glycan is linked to asparagine 332. Arginine 372 contacts substrate. Serine 551 is lipidated: GPI-anchor amidated serine. Positions 552–581 are cleaved as a propeptide — removed in mature form; it reads EAKTIRSFTKLKLFILLIAVPFALPMIILI.

It belongs to the glycosyl hydrolase 13 family. The cofactor is Ca(2+).

The protein resides in the cell membrane. The catalysed reaction is Endohydrolysis of (1-&gt;4)-alpha-D-glucosidic linkages in polysaccharides containing three or more (1-&gt;4)-alpha-linked D-glucose units.. This chain is Alpha-amylase 2 (aah2), found in Schizosaccharomyces pombe (strain 972 / ATCC 24843) (Fission yeast).